The sequence spans 276 residues: Ribosomal RNA small subunit methyltransferase A (276 aa).

Asparagine 16, leucine 18, glycine 43, glutamate 64, aspartate 89, and asparagine 109 together coordinate S-adenosyl-L-methionine.

The protein belongs to the class I-like SAM-binding methyltransferase superfamily. rRNA adenine N(6)-methyltransferase family. RsmA subfamily.

The protein localises to the cytoplasm. The catalysed reaction is adenosine(1518)/adenosine(1519) in 16S rRNA + 4 S-adenosyl-L-methionine = N(6)-dimethyladenosine(1518)/N(6)-dimethyladenosine(1519) in 16S rRNA + 4 S-adenosyl-L-homocysteine + 4 H(+). Its function is as follows. Specifically dimethylates two adjacent adenosines (A1518 and A1519) in the loop of a conserved hairpin near the 3'-end of 16S rRNA in the 30S particle. May play a critical role in biogenesis of 30S subunits. This chain is Ribosomal RNA small subunit methyltransferase A, found in Marinobacter nauticus (strain ATCC 700491 / DSM 11845 / VT8) (Marinobacter aquaeolei).